Here is a 245-residue protein sequence, read N- to C-terminus: 8-amino-3,8-dideoxy-manno-octulosonate cytidylyltransferase (245 aa).

The protein belongs to the KdsB family.

The protein localises to the cytoplasm. It catalyses the reaction 8-amino-3,8-dideoxy-alpha-D-manno-octulosonate + CTP = CMP-8-amino-3,8-dideoxy-alpha-D-manno-oct-2-ulosonate + diphosphate. It functions in the pathway bacterial outer membrane biogenesis; lipopolysaccharide biosynthesis. Activates KDO8N (a required 8-carbon sugar) for incorporation into bacterial lipopolysaccharide in the Shewanella genus. The protein is 8-amino-3,8-dideoxy-manno-octulosonate cytidylyltransferase of Shewanella loihica (strain ATCC BAA-1088 / PV-4).